Consider the following 530-residue polypeptide: Pentatricopeptide repeat-containing protein At3g51320 (530 aa).

10 PPR repeats span residues 82–116, 117–151, 152–182, 183–217, 218–248, 249–283, 284–314, 315–349, 350–380, and 386–420; these read KLYC…GFVP, DSYT…GCDQ, VLPV…IPKR, DIVS…NIIS, WNIM…GFQG, NEST…FLNS, SVVI…LSIR, NKVT…MLRP, DEVT…MVDE, and NFGH…DVTP. Residues 424–499 are type E motif; the sequence is KWANLLSSSR…IPGCGLVDLK (76 aa).

The protein belongs to the PPR family. PCMP-E subfamily.

This Arabidopsis thaliana (Mouse-ear cress) protein is Pentatricopeptide repeat-containing protein At3g51320.